Consider the following 160-residue polypeptide: Archaemetzincin (160 aa).

Position 117 (His117) interacts with Zn(2+). The Proton acceptor role is filled by Glu118. The Zn(2+) site is built by His121, His127, Cys128, Cys132, Cys151, and Cys154.

Belongs to the peptidase M54 family. In terms of assembly, monomer. Zn(2+) serves as cofactor.

Its function is as follows. Probable zinc metalloprotease whose natural substrate is unknown. This is Archaemetzincin from Archaeoglobus fulgidus (strain ATCC 49558 / DSM 4304 / JCM 9628 / NBRC 100126 / VC-16).